The chain runs to 976 residues: Vacuolar membrane protease (976 aa).

The Cytoplasmic segment spans residues 1–15 (MKLKSVFRSVLKYRK). Residues 16-36 (TNLSLLLLITYSIITLLYIFD) traverse the membrane as a helical segment. The Vacuolar portion of the chain corresponds to 37–359 (HERYKLNLPK…KFFVISAKTL (323 aa)). N-linked (GlcNAc...) asparagine glycans are attached at residues N96 and N121. H156 and D168 together coordinate Zn(2+). N189 carries an N-linked (GlcNAc...) asparagine glycan. E200 (proton acceptor) is an active-site residue. Residue E201 coordinates Zn(2+). N212 and N217 each carry an N-linked (GlcNAc...) asparagine glycan. Zn(2+)-binding residues include E226 and H300. The chain crosses the membrane as a helical span at residues 360 to 380 (FYWNCIFLLVSPVVAIGLYLI). Residues 381–392 (SRDRMTWKSHSW) are Cytoplasmic-facing. The helical transmembrane segment at 393–412 (LSWTRFPLSLAAGIIVQKLF) threads the bilayer. At 413 to 428 (SNDIIRSNPLTFSRNY) the chain is on the vacuolar side. A helical transmembrane segment spans residues 429–449 (FWPISAFFTQVIFTSYVLINC). The Cytoplasmic segment spans residues 450-461 (SNFFFPCADMKS). The helical transmembrane segment at 462–482 (LSIIELFIILWTILLFTSKLL) threads the bilayer. Topologically, residues 483–496 (YSSDYRYTGLYPLS) are vacuolar. A helical transmembrane segment spans residues 497 to 517 (IFFLLSTIAAILRLLALALGM). Over 518–627 (RTRKRLGREC…NSLKLEYTDY (110 aa)) the chain is Cytoplasmic. Residues 528–610 (RDHHSNYSSH…PLLKGSNSME (83 aa)) are disordered. Residues 549–558 (NLEQPQDQFT) show a composition bias toward polar residues. The span at 559 to 570 (SSQDDQASIQDD) shows a compositional bias: low complexity. The span at 582 to 601 (NVDEDHGMDSSSQQHDERVP) shows a compositional bias: basic and acidic residues. Residues 628–648 (AWIIQFLLIVPIPSFILFNSV) form a helical membrane-spanning segment. Over 649 to 668 (DVIMDALNHTVQEGSKATFD) the chain is Vacuolar. N656 carries N-linked (GlcNAc...) asparagine glycosylation. A helical transmembrane segment spans residues 669–689 (VLRFGMVGSILMALPILPFFY). The Cytoplasmic segment spans residues 690 to 692 (KVN). Residues 693 to 713 (YITISLTALLFLISASKTLLV) traverse the membrane as a helical segment. Topologically, residues 714–976 (HPFTNSNPLK…LVIVKDAIIL (263 aa)) are vacuolar. N-linked (GlcNAc...) asparagine glycosylation is found at N768, N796, N811, N866, and N937.

The protein belongs to the peptidase M28 family. Zn(2+) serves as cofactor.

The protein localises to the vacuole membrane. In terms of biological role, may be involved in vacuolar sorting and osmoregulation. The protein is Vacuolar membrane protease of Saccharomyces cerevisiae (strain RM11-1a) (Baker's yeast).